A 55-amino-acid polypeptide reads, in one-letter code: Large ribosomal subunit protein bL33 (55 aa).

It belongs to the bacterial ribosomal protein bL33 family.

The protein is Large ribosomal subunit protein bL33 of Rhodopseudomonas palustris (strain BisA53).